A 61-amino-acid chain; its full sequence is Large ribosomal subunit protein bL32 (61 aa).

It belongs to the bacterial ribosomal protein bL32 family.

In Ehrlichia chaffeensis (strain ATCC CRL-10679 / Arkansas), this protein is Large ribosomal subunit protein bL32.